A 1482-amino-acid chain; its full sequence is MIERGKFRSLTLVNWNGFFARTFDLDELVTTLSGGNGAGKSTTMAAFVTALIPDLTLLHFRNTTEAGATSGSRDKGLHGKLRAGVCYSTLDVLNSRHQRVVVGVRLQQVAGRDRKVDIKPFVIQGLPTAVQPTELLTQTVGERQARVLSLQELKDRVEEMEGVQFKQFNSITDYHSLMFDLGVIPKRLRSSSDRSKFYRLIEASLYGGISSAITRSLRDYLLPENSGVRKAFQDMEAALRENRMTLEAIRVTQSDRDLFKHLISEATSYVAADYMRHANERRIHLDGALALRNDLLGSRKQLAAEQYRHVEMARELAEQSGAESDLETDYQAASDHLNLVQTAMRQQEKIERYEGDLEELTYRLEEQNEVVAEASEQQAENEARAEAAELEVDELKSQLADYQQALDVQQTRAIQYQQALQALDRARTLCQLPELTAENAEHWLDTFQAREQEATEALLMLEQKLSVADAAHGQFEQAYQLVGKIAGQVSRSEAWQCARELLRDWPSQQHLAERVQPLRMRLSELEQRLRSQQDAERLLQEFCKRHGQQYQPDELDALQQELEERLESLSQGVSDAGERRMEMRQELEQIQQRIRELTTRAPIWLAAQDALSQLGEQSGEALESSQQVTEYMQQLLERERETTVERDEVAAGKRAVEAQIERLSQPGGAEDQRLVTLAERFGGVLLSEIYDDVTIDDAPYFSALYGPSRHAIVVPDLSLVREMLEGLEDCPEDLYLIEGDPQSFDDSVFAVEEQDRAVLVKTAERQWRYSRYPAVPLFGRAARENRLEILHAEREKLAERYATLSFDVQKTQRSHQAFSRFIGNHLAVAFDADPEAEIRGLNTRRGEIERALNNHEAQNQQQRQQYDQAKEGISALNRLTPLVSLLNDETLQDRVEEIREELEEAQDAARHIQQHGVSLTKLEPLLSVLQSDPQQHEQLQQDYTQAQSVQRQAKQQAFALIEVVQRRAHFSYTDSAGMQNANNDLNDKLRQRLEHAEAERTRAREQLRQYQTQFTQYSQVLASLKSSYDAKRDMLKELSQELVDIGVQADANAEARARTRRDELHAGLSTNRARRNQLEKQLTFCEAEMDSLQKKLRKLERDYYQLREQVVTAKAGWCAVMRLVKDNGVERRLHRRELAYMDGDELRSMSDKALGALRLAVSDNEHLRDVLRLSEDPKRPERKIQFYIAVYQHLRERIRQDIIRTDDPVEAIEQMEIELGRLTEELTAREQKLAISSKSVANIIRKTIQREQNRIRMLNQGLQAVSFGQVKSVRLNVNVREAHATLLDVLSEQQEQHQDLFNSNRLTFSEALAKLYQRLNPQIDMGQRTPQTIGEELLDYRNYLELEVEVFRGSDGWLRAESGALSTGEAIGTGMSILVMVVQSWEEESRRLRGKDISPCRLLFLDEAARLDAKSIATLFELCDRLEMQLIIAAPENISPEKGTTYKLVRKVFQNHEHVHVVGLRGFANEPPVLGVTAAETP.

34 to 41 serves as a coordination point for ATP; the sequence is GGNGAGKS. Coiled coils occupy residues 337-468, 509-604, 780-805, 835-1044, 1070-1115, and 1210-1265; these read LNLV…LSVA, QHLA…APIW, RAAR…ATLS, EAEI…ELVD, TNRA…TAKA, and EAIE…LQAV. Positions 666 to 783 are flexible hinge; sequence PGGAEDQRLV…AVPLFGRAAR (118 aa).

It belongs to the SMC family. MukB subfamily. As to quaternary structure, homodimerization via its hinge domain. Binds to DNA via its C-terminal region. Interacts, and probably forms a ternary complex, with MukE and MukF via its C-terminal region. The complex formation is stimulated by calcium or magnesium. Interacts with tubulin-related protein FtsZ.

It localises to the cytoplasm. The protein resides in the nucleoid. Its function is as follows. Plays a central role in chromosome condensation, segregation and cell cycle progression. Functions as a homodimer, which is essential for chromosome partition. Involved in negative DNA supercoiling in vivo, and by this means organize and compact chromosomes. May achieve or facilitate chromosome segregation by condensation DNA from both sides of a centrally located replisome during cell division. The protein is Chromosome partition protein MukB of Serratia proteamaculans (strain 568).